The primary structure comprises 437 residues: Ribosomal protein uS12 methylthiotransferase RimO (437 aa).

In terms of domain architecture, MTTase N-terminal spans 9–124 (TKVNIVTLGC…LPAILKKFRA (116 aa)). The [4Fe-4S] cluster site is built by C18, C56, C90, C151, C155, and C158. Residues 137 to 367 (TTPSHYAYVK…MSIQEGISAE (231 aa)) enclose the Radical SAM core domain. Positions 370–437 (EKKIGNTYKV…EFDLFGEIVK (68 aa)) constitute a TRAM domain.

Belongs to the methylthiotransferase family. RimO subfamily. [4Fe-4S] cluster serves as cofactor.

Its subcellular location is the cytoplasm. It carries out the reaction L-aspartate(89)-[ribosomal protein uS12]-hydrogen + (sulfur carrier)-SH + AH2 + 2 S-adenosyl-L-methionine = 3-methylsulfanyl-L-aspartate(89)-[ribosomal protein uS12]-hydrogen + (sulfur carrier)-H + 5'-deoxyadenosine + L-methionine + A + S-adenosyl-L-homocysteine + 2 H(+). Catalyzes the methylthiolation of an aspartic acid residue of ribosomal protein uS12. This Cytophaga hutchinsonii (strain ATCC 33406 / DSM 1761 / CIP 103989 / NBRC 15051 / NCIMB 9469 / D465) protein is Ribosomal protein uS12 methylthiotransferase RimO.